A 330-amino-acid polypeptide reads, in one-letter code: Putative UV-damage endonuclease (330 aa).

It belongs to the uve1/UvsE family.

The protein resides in the virion. Functionally, endonuclease for the repair of UV-irradiated DNA. The sequence is that of Putative UV-damage endonuclease from Acanthamoeba polyphaga mimivirus (APMV).